A 95-amino-acid polypeptide reads, in one-letter code: Integration host factor subunit beta (95 aa).

The protein belongs to the bacterial histone-like protein family. In terms of assembly, heterodimer of an alpha and a beta chain.

In terms of biological role, this protein is one of the two subunits of integration host factor, a specific DNA-binding protein that functions in genetic recombination as well as in transcriptional and translational control. Involved in hydrogenase gene expression. In Rhodobacter capsulatus (Rhodopseudomonas capsulata), this protein is Integration host factor subunit beta (ihfB).